We begin with the raw amino-acid sequence, 512 residues long: Rab11 family-interacting protein 2 (512 aa).

One can recognise a C2 domain in the interval 1–120 (MMLSEQAQKW…DKQRRKTEWF (120 aa)). The interval 15–102 (VQVTVLQAKD…GLDKFLGQVA (88 aa)) is necessary for its cellular translocation to the plasma membrane. Disordered regions lie at residues 174–231 (RKSD…MSDL) and 263–287 (PESG…NQPG). 2 stretches are compositionally biased toward polar residues: residues 221 to 231 (RLSSAHSMSDL) and 277 to 287 (SFDTSKLNQPG). Serine 227 bears the Phosphoserine; by MARK2 mark. Serine 277 is modified (phosphoserine). The short motif at 323 to 325 (NPF) is the NPF 1 element. The segment covering 347–374 (KESKREKREKVSLFERVTGKRDSRRPDK) has biased composition (basic and acidic residues). The segment at 347-390 (KESKREKREKVSLFERVTGKRDSRRPDKLNNGGSDSPCDLKSPS) is disordered. Short sequence motifs (NPF) lie at residues 406 to 408 (NPF) and 440 to 442 (NPF). The region spanning 437 to 499 (PDNNPFDATA…EETPSILRVP (63 aa)) is the FIP-RBD domain. Positions 465–512 (ELLRRKDTHIRELEDYIDNLLVRVMEETPSILRVPYEPSRKAGKFTNS) are necessary for interaction with AP2A1, RAB11A, subcellular location, endocytosis activity and homooligomerization.

Homooligomerizes in a Rab11-independent manner. Forms a heterooligomeric complex with RAB11FIP4. Interacts with AP2A1, MYO5B, RAB25 and REPS1. Interacts with RAB11A and RAB11B (activated GTP-bound form). Interacts with NPC1L1. Interacts (via NPF motifs) with EHD1 and EHD3. Interacts with TICAM2; this interaction directs RAB11FIP2 to the phagosome. Interacts with RAB14 and RAB25 (GTP-bound forms). In terms of processing, phosphorylation at Ser-227 by MARK2 regulates epithelial cell polarity.

The protein localises to the cell membrane. Its subcellular location is the recycling endosome membrane. In terms of biological role, a Rab11 effector binding preferentially phosphatidylinositol 3,4,5-trisphosphate (PtdInsP3) and phosphatidic acid (PA) and acting in the regulation of the transport of vesicles from the endosomal recycling compartment (ERC) to the plasma membrane. Involved in insulin granule exocytosis. Also involved in receptor-mediated endocytosis and membrane trafficking of recycling endosomes, probably originating from clathrin-coated vesicles. Required in a complex with MYO5B and RAB11 for the transport of NPC1L1 to the plasma membrane. Also acts as a regulator of cell polarity. Plays an essential role in phagocytosis through a mechanism involving TICAM2, RAC1 and CDC42 Rho GTPases for controlling actin-dynamics. This Mus musculus (Mouse) protein is Rab11 family-interacting protein 2 (Rab11fip2).